A 444-amino-acid polypeptide reads, in one-letter code: Ribosomal protein uS12 methylthiotransferase RimO (444 aa).

Positions 3 to 119 constitute an MTTase N-terminal domain; the sequence is IKIGLVSLGC…IARAVRRVLE (117 aa). [4Fe-4S] cluster-binding residues include Cys-12, Cys-48, Cys-82, Cys-156, Cys-160, and Cys-163. The Radical SAM core domain occupies 142–372; sequence ATPPYTAYLK…MMLQQEISLQ (231 aa). Residues 375-444 enclose the TRAM domain; the sequence is LKRVGEVIEV…EYDLTGETVL (70 aa).

This sequence belongs to the methylthiotransferase family. RimO subfamily. Requires [4Fe-4S] cluster as cofactor.

It is found in the cytoplasm. The enzyme catalyses L-aspartate(89)-[ribosomal protein uS12]-hydrogen + (sulfur carrier)-SH + AH2 + 2 S-adenosyl-L-methionine = 3-methylsulfanyl-L-aspartate(89)-[ribosomal protein uS12]-hydrogen + (sulfur carrier)-H + 5'-deoxyadenosine + L-methionine + A + S-adenosyl-L-homocysteine + 2 H(+). Functionally, catalyzes the methylthiolation of an aspartic acid residue of ribosomal protein uS12. This Pelotomaculum thermopropionicum (strain DSM 13744 / JCM 10971 / SI) protein is Ribosomal protein uS12 methylthiotransferase RimO.